A 104-amino-acid polypeptide reads, in one-letter code: UPF0235 protein RBE_0633 (104 aa).

The protein belongs to the UPF0235 family.

This chain is UPF0235 protein RBE_0633, found in Rickettsia bellii (strain RML369-C).